The following is a 626-amino-acid chain: ATP-dependent rRNA helicase spb4 (626 aa).

A Q motif motif is present at residues 14–42 (WDALTPSLAEWVLDAISSMGFEKMTPVQA). One can recognise a Helicase ATP-binding domain in the interval 45–246 (IPLFMGNKDV…RVGLRNPVKI (202 aa)). Position 58 to 65 (58 to 65 (AVTGSGKT)) interacts with ATP. The short motif at 194–197 (DEAD) is the DEAD box element. One can recognise a Helicase C-terminal domain in the interval 279–437 (ALLSLLSQLE…TTGEAAKILI (159 aa)). The tract at residues 553–599 (QREAWSQKHEKQDLKELKREKKKRKREIERLEKMTDEEKKEEQAKEK) is disordered. Composition is skewed to basic and acidic residues over residues 554–571 (REAW…ELKR) and 578–599 (REIE…AKEK). A coiled-coil region spans residues 558-620 (SQKHEKQDLK…RKIEDDADVE (63 aa)).

Belongs to the DEAD box helicase family. DDX55/SPB4 subfamily. As to quaternary structure, component of pre-60S ribosomal complexes.

Its subcellular location is the nucleus. The protein localises to the nucleolus. It carries out the reaction ATP + H2O = ADP + phosphate + H(+). In terms of biological role, ATP-binding RNA helicase involved in the biogenesis of 60S ribosomal subunits. Binds 90S pre-ribosomal particles and dissociates from pre-60S ribosomal particles after processing of 27SB pre-rRNA. Required for the normal formation of 18S rRNA through the processing of pre-rRNAs at sites A0, A1 and A2, and the normal formation of 25S and 5.8S rRNAs through the processing of pre-rRNAs at sites C1 and C2. This chain is ATP-dependent rRNA helicase spb4, found in Botryotinia fuckeliana (strain B05.10) (Noble rot fungus).